A 125-amino-acid polypeptide reads, in one-letter code: UPF0738 protein GTNG_0708 (125 aa).

This sequence belongs to the UPF0738 family.

The polypeptide is UPF0738 protein GTNG_0708 (Geobacillus thermodenitrificans (strain NG80-2)).